Consider the following 458-residue polypeptide: Divalent metal cation transporter MntH (458 aa).

11 helical membrane passes run G38–M58, L86–L106, G119–I139, I151–M171, A180–A200, M223–H243, L275–G295, I315–S335, G370–V390, I395–F415, and W436–L456.

This sequence belongs to the NRAMP family.

It localises to the cell membrane. In terms of biological role, h(+)-stimulated, divalent metal cation uptake system. The chain is Divalent metal cation transporter MntH from Latilactobacillus sakei subsp. sakei (strain 23K) (Lactobacillus sakei subsp. sakei).